A 459-amino-acid chain; its full sequence is Bifunctional protein GlmU (459 aa).

The pyrophosphorylase stretch occupies residues 1 to 229 (MSNFAIILAA…FDESLGVNDR (229 aa)). UDP-N-acetyl-alpha-D-glucosamine-binding positions include 8–11 (LAAG), Lys-22, Gln-72, and 77–78 (GT). Asp-102 contacts Mg(2+). The UDP-N-acetyl-alpha-D-glucosamine site is built by Gly-139, Glu-154, Asn-169, and Asn-227. A Mg(2+)-binding site is contributed by Asn-227. Residues 230–250 (VALATAESVMRRRINHKHMVN) are linker. Residues 251–459 (GVSFVNPEAT…TRLPHHPKNQ (209 aa)) form an N-acetyltransferase region. Positions 332 and 350 each coordinate UDP-N-acetyl-alpha-D-glucosamine. Catalysis depends on His-362, which acts as the Proton acceptor. Tyr-365 and Asn-376 together coordinate UDP-N-acetyl-alpha-D-glucosamine. Residues Ala-379, 385-386 (NY), Ser-404, Ala-422, and Arg-439 contribute to the acetyl-CoA site.

It in the N-terminal section; belongs to the N-acetylglucosamine-1-phosphate uridyltransferase family. The protein in the C-terminal section; belongs to the transferase hexapeptide repeat family. As to quaternary structure, homotrimer. It depends on Mg(2+) as a cofactor.

Its subcellular location is the cytoplasm. It carries out the reaction alpha-D-glucosamine 1-phosphate + acetyl-CoA = N-acetyl-alpha-D-glucosamine 1-phosphate + CoA + H(+). It catalyses the reaction N-acetyl-alpha-D-glucosamine 1-phosphate + UTP + H(+) = UDP-N-acetyl-alpha-D-glucosamine + diphosphate. It participates in nucleotide-sugar biosynthesis; UDP-N-acetyl-alpha-D-glucosamine biosynthesis; N-acetyl-alpha-D-glucosamine 1-phosphate from alpha-D-glucosamine 6-phosphate (route II): step 2/2. Its pathway is nucleotide-sugar biosynthesis; UDP-N-acetyl-alpha-D-glucosamine biosynthesis; UDP-N-acetyl-alpha-D-glucosamine from N-acetyl-alpha-D-glucosamine 1-phosphate: step 1/1. The protein operates within bacterial outer membrane biogenesis; LPS lipid A biosynthesis. Functionally, catalyzes the last two sequential reactions in the de novo biosynthetic pathway for UDP-N-acetylglucosamine (UDP-GlcNAc). The C-terminal domain catalyzes the transfer of acetyl group from acetyl coenzyme A to glucosamine-1-phosphate (GlcN-1-P) to produce N-acetylglucosamine-1-phosphate (GlcNAc-1-P), which is converted into UDP-GlcNAc by the transfer of uridine 5-monophosphate (from uridine 5-triphosphate), a reaction catalyzed by the N-terminal domain. The sequence is that of Bifunctional protein GlmU from Streptococcus pneumoniae (strain Taiwan19F-14).